A 505-amino-acid chain; its full sequence is L-carnitine/gamma-butyrobetaine antiporter (505 aa).

Helical transmembrane passes span 10–30, 51–71, 92–112, 143–163, 195–215, 231–251, 263–283, 316–336, 347–367, 403–423, 446–466, and 475–495; these read IEPK…WLTV, WGWA…WLVF, IFMM…SIEI, GPLP…FFFV, FYLV…TPLV, LDAI…ACGL, SYLS…SFIM, WTVF…IFLA, LCFG…TVLG, LSTA…VTLI, LLVR…LLAL, and AIIA…LSFI.

It belongs to the BCCT transporter (TC 2.A.15) family. CaiT subfamily. As to quaternary structure, homotrimer.

The protein resides in the cell inner membrane. The catalysed reaction is 4-(trimethylamino)butanoate(in) + (R)-carnitine(out) = 4-(trimethylamino)butanoate(out) + (R)-carnitine(in). Its pathway is amine and polyamine metabolism; carnitine metabolism. Catalyzes the exchange of L-carnitine for gamma-butyrobetaine. In Salmonella agona (strain SL483), this protein is L-carnitine/gamma-butyrobetaine antiporter.